The following is a 1412-amino-acid chain: MKDLVKFLKAQSKSNDDFDVIKIGLASPDKIRSWSFGEVKKPETINYRTFKPERDGLFCARIFGPVKDYECLCGKYKRLRHRGVICEKCGVEVTQTKVRRDRMGHIELACPVAHIWFLKSLPSRIGLILDMPLRDIERVLYFESYVVTEPGMTDLEKNQLLTEEQFLDAEERWGDEFEAKMGAEGIQALLRDMDLEHQCEMMREELQETNSETKRKKITKRLKLLEAFQQSGNKPEWMVMTVLPVLPPDLRPLVPLDGGRFATSDLNDLYRRVINRNNRLKRLLDLVAPDIIVRNEKRMLQESVDALLDNGRRGRAITGSNKRPLKSLADMIKGKQGRFRQNLLGKRVDYSGRSVITVGPYLHLHQCGLPKKMALELFRPFIYSKLESRGIASTIKAAKKMVEREEPIVWDILAEVIREHPILLNRAPTLHRLGIQAFEPILIEGKAIQLHPLVCAAFNADFDGDQMAVHVPLTLEAQLEARALMMSTNNVLSPASGDPIIVPSQDVVLGLYYMTREKVNAKGEGMYFLDPREAEKAYRTGQAELHARVKVRITEHVKNEAGELVAETKLLDTTIGRAILWMIAPKGMPFKVFNQTLGKKAISKLINESYRRLGLKESVILADQIMYTGFAYAARSGASVGIDDMVIPAQKHEIIRAAEAEVAEIQEQFNSGLVTAGERYNKVIDIWAAANERVAKAMMENLSTEEVINREGNPEKQASFNSIFMMADSGARGSAAQIRQLAGMRGLMARPDGSIIETPITANFREGLNVLQYFISTHGARKGLADTALKTANSGYLTRRLVDVAQDLVITEDDCGTHEGIVMTPLIEGGDVKEALRDRVLGRVVAEDVLKPGTEEVLIPRNTLIDEKWCDVIDAESVDVIKVRSVVTCNTDFGVCAKCYGRDLARGHLINQGEAVGVIAAQSIGEPGTQLTMRTFHIGGAASAAAKESSIQVKNAGTIKLTNAKFVTNKEGKIVLTSRNTELTVIDTFGRTKENYKVPYGAVLSKNDGAEVAVGEVVANWDPHTMPVISEVSGRIQFSDIVDGLTVTRQTDELTGLSSIVVQDVGERATAGKDLRPALRLVDAQGNDILIPSTDVAAQYFLPGKAIVTLDDGAEIEVGEALARIPQESVGTKDITGGLPRVADLFEARKPKEPAILAEISGIVSFGKETKGKRRLVITPAEGEAFEEMIPKWRQLNVFEGEMVQRGDVISDGAETPHDILRLRGVHAVTDYIVNEVQEVYRLQGVKINDKHIEVIVRQMLRKAVITNAYDSEFLEGEQVEVSRVKIANRKRAEEGKPLVEFERELLGITKASLATESFISAASFQETTRVLTEAAVAGKRDELRGLKENVIVGRLIPAGTGFAYHQNRAKKRNQQEQAVAFEAPVEKLTGSQPMLISKRNSNSLQTMQLKA.

The Zn(2+) site is built by C71, C73, C86, and C89. Positions 461, 463, and 465 each coordinate Mg(2+). The Zn(2+) site is built by C815, C889, C896, and C899.

It belongs to the RNA polymerase beta' chain family. The RNAP catalytic core consists of 2 alpha, 1 beta, 1 beta' and 1 omega subunit. When a sigma factor is associated with the core the holoenzyme is formed, which can initiate transcription. Requires Mg(2+) as cofactor. It depends on Zn(2+) as a cofactor.

The catalysed reaction is RNA(n) + a ribonucleoside 5'-triphosphate = RNA(n+1) + diphosphate. DNA-dependent RNA polymerase catalyzes the transcription of DNA into RNA using the four ribonucleoside triphosphates as substrates. The polypeptide is DNA-directed RNA polymerase subunit beta' (Actinobacillus pleuropneumoniae serotype 5b (strain L20)).